The primary structure comprises 215 residues: Pyrrolidone-carboxylate peptidase (215 aa).

Active-site residues include E80, C143, and H167.

Belongs to the peptidase C15 family. Homotetramer.

Its subcellular location is the cytoplasm. The catalysed reaction is Release of an N-terminal pyroglutamyl group from a polypeptide, the second amino acid generally not being Pro.. Functionally, removes 5-oxoproline from various penultimate amino acid residues except L-proline. This Bacillus cereus (strain ZK / E33L) protein is Pyrrolidone-carboxylate peptidase.